Reading from the N-terminus, the 79-residue chain is Small ribosomal subunit protein uS17 (79 aa).

It belongs to the universal ribosomal protein uS17 family. In terms of assembly, part of the 30S ribosomal subunit.

One of the primary rRNA binding proteins, it binds specifically to the 5'-end of 16S ribosomal RNA. In Bartonella quintana (strain Toulouse) (Rochalimaea quintana), this protein is Small ribosomal subunit protein uS17.